Reading from the N-terminus, the 604-residue chain is Aspartate--tRNA(Asp/Asn) ligase (604 aa).

Position 175 (Glu175) interacts with L-aspartate. An aspartate region spans residues 199-202 (QQFK). Arg221 and His456 together coordinate L-aspartate. 221–223 (RDE) provides a ligand contact to ATP. Residue Glu496 participates in ATP binding. Arg503 is an L-aspartate binding site. 548 to 551 (GVDR) is an ATP binding site.

It belongs to the class-II aminoacyl-tRNA synthetase family. Type 1 subfamily. In terms of assembly, homodimer.

The protein resides in the cytoplasm. The enzyme catalyses tRNA(Asx) + L-aspartate + ATP = L-aspartyl-tRNA(Asx) + AMP + diphosphate. Aspartyl-tRNA synthetase with relaxed tRNA specificity since it is able to aspartylate not only its cognate tRNA(Asp) but also tRNA(Asn). Reaction proceeds in two steps: L-aspartate is first activated by ATP to form Asp-AMP and then transferred to the acceptor end of tRNA(Asp/Asn). This Methylobacterium nodulans (strain LMG 21967 / CNCM I-2342 / ORS 2060) protein is Aspartate--tRNA(Asp/Asn) ligase.